The sequence spans 148 residues: Short form salivary protein D7S1 (148 aa).

The first 21 residues, 1-21, serve as a signal peptide directing secretion; the sequence is MKQNVFFLIAYFSLVFCMCNA. Cystine bridges form between Cys-28–Cys-61, Cys-41–Cys-147, and Cys-103–Cys-119.

It belongs to the PBP/GOBP family. Female salivary gland.

It localises to the secreted. In contrast to the related D7 salivary proteins that can bind biogenic amines, does not bind serotonin. The polypeptide is Short form salivary protein D7S1 (Aedes aegypti (Yellowfever mosquito)).